A 442-amino-acid polypeptide reads, in one-letter code: tRNA modification GTPase MnmE (442 aa).

The (6S)-5-formyl-5,6,7,8-tetrahydrofolate site is built by arginine 24, glutamate 82, and lysine 120. A TrmE-type G domain is found at 217 to 367; sequence GLHIVITGEP…LVSVIKEKVE (151 aa). GTP contacts are provided by residues 227–232, 246–252, and 271–274; these read NVGKST, SEYVGTT, and DTAG. Mg(2+)-binding residues include serine 231 and threonine 252. Lysine 442 contributes to the (6S)-5-formyl-5,6,7,8-tetrahydrofolate binding site.

Belongs to the TRAFAC class TrmE-Era-EngA-EngB-Septin-like GTPase superfamily. TrmE GTPase family. As to quaternary structure, homodimer. Heterotetramer of two MnmE and two MnmG subunits. The cofactor is K(+).

It localises to the cytoplasm. Functionally, exhibits a very high intrinsic GTPase hydrolysis rate. Involved in the addition of a carboxymethylaminomethyl (cmnm) group at the wobble position (U34) of certain tRNAs, forming tRNA-cmnm(5)s(2)U34. This chain is tRNA modification GTPase MnmE, found in Wolbachia sp. subsp. Brugia malayi (strain TRS).